The sequence spans 500 residues: Cytosol aminopeptidase (500 aa).

Residues Lys-265 and Asp-270 each coordinate Mn(2+). Lys-277 is an active-site residue. Mn(2+) contacts are provided by Asp-288, Asp-347, and Glu-349. Arg-351 is a catalytic residue.

Belongs to the peptidase M17 family. Mn(2+) serves as cofactor.

Its subcellular location is the cytoplasm. It carries out the reaction Release of an N-terminal amino acid, Xaa-|-Yaa-, in which Xaa is preferably Leu, but may be other amino acids including Pro although not Arg or Lys, and Yaa may be Pro. Amino acid amides and methyl esters are also readily hydrolyzed, but rates on arylamides are exceedingly low.. The catalysed reaction is Release of an N-terminal amino acid, preferentially leucine, but not glutamic or aspartic acids.. Presumably involved in the processing and regular turnover of intracellular proteins. Catalyzes the removal of unsubstituted N-terminal amino acids from various peptides. This Rickettsia prowazekii (strain Madrid E) protein is Cytosol aminopeptidase (pepA).